We begin with the raw amino-acid sequence, 298 residues long: Tyrosine recombinase XerC (298 aa).

One can recognise a Core-binding (CB) domain in the interval 2–88; that stretch reads TDLHTDVERY…ALRSFFDWLV (87 aa). The Tyr recombinase domain maps to 109 to 288; sequence HLPKNIDVDD…DFQHLASVYD (180 aa). Catalysis depends on residues arginine 148, lysine 172, histidine 240, arginine 243, and histidine 266. The active-site O-(3'-phospho-DNA)-tyrosine intermediate is tyrosine 275.

The protein belongs to the 'phage' integrase family. XerC subfamily. As to quaternary structure, forms a cyclic heterotetrameric complex composed of two molecules of XerC and two molecules of XerD, in which XerC interacts with XerD via its C-terminal region, XerD interacts with XerC via its C-terminal region and so on.

The protein localises to the cytoplasm. With respect to regulation, ftsK may regulate the catalytic switch between XerC and XerD in the heterotetrameric complex during the two steps of the recombination process. Its function is as follows. Site-specific tyrosine recombinase, which acts by catalyzing the cutting and rejoining of the recombining DNA molecules. Binds cooperatively to specific DNA consensus sequences that are separated from XerD binding sites by a short central region, forming the heterotetrameric XerC-XerD complex that recombines DNA substrates. The complex is essential to convert dimers of the bacterial chromosome into monomers to permit their segregation at cell division. It also contributes to the segregational stability of plasmids. In the complex XerC specifically exchanges the top DNA strands. The sequence is that of Tyrosine recombinase XerC from Escherichia coli O127:H6 (strain E2348/69 / EPEC).